The following is a 372-amino-acid chain: ATP phosphoribosyltransferase regulatory subunit (372 aa).

Belongs to the class-II aminoacyl-tRNA synthetase family. HisZ subfamily. As to quaternary structure, heteromultimer composed of HisG and HisZ subunits.

It localises to the cytoplasm. It participates in amino-acid biosynthesis; L-histidine biosynthesis; L-histidine from 5-phospho-alpha-D-ribose 1-diphosphate: step 1/9. Required for the first step of histidine biosynthesis. May allow the feedback regulation of ATP phosphoribosyltransferase activity by histidine. The sequence is that of ATP phosphoribosyltransferase regulatory subunit from Allorhizobium ampelinum (strain ATCC BAA-846 / DSM 112012 / S4) (Agrobacterium vitis (strain S4)).